Reading from the N-terminus, the 609-residue chain is MPDYRSKTSTHGRNMAGARGLWRATGMKDEDFGKPIIAVVNSFTQFVPGHVHLKDLGQLVAAEIQAAGGVAKEFNTIAVDDGIAMGHDGMLYSLPSRDLIADSVEYMVNAHCADAMVCISNCDKITPGMLMAAMRLNIPVVFVSGGPMEAGKVKFRGDEKAIDLVDAMVVAADDSYTDEEVAEFERSACPTCGSCSGMFTANSMNCLTEALGLSLPGNGSIVATHANRKKLFLKAGQLIVELAKRYYEQNDASILPRSIATKAAFKNAMTLDIAMGGSTNTVLHLLAAANEAEVDFTMDDIDELSRRVPVLSKVAPAKQDVHMEDVHRAGGIMAILGELDRANLLDVSVPTVHEKTLKDALDKWDIIRTEDPEVYEFYRSSPGGVPTQVAFSQNRYYSTLDGDREKGVIRNAEHAFSKDGGLAVLYGNIALDGCIVKTAGVDESILKFTGTARVFESQDAAVEAILGNEIKAGDVVVIRYEGPRGGPGMQEMLYPTSYLKSKGLGKDCALVTDGRFSGGSSGLSIGHVSPEAAEGGAIGLVEDGDTIEIDIPNRTIHLNIDDATMAHRRTVQEAKGWHPKEERKRKVSKALKVYAMHTTSAAKGAVRVL.

Asp81 contacts Mg(2+). Cys122 is a [2Fe-2S] cluster binding site. 2 residues coordinate Mg(2+): Asp123 and Lys124. Lys124 is modified (N6-carboxylysine). Residue Cys195 coordinates [2Fe-2S] cluster. Glu491 serves as a coordination point for Mg(2+). Residue Ser517 is the Proton acceptor of the active site.

This sequence belongs to the IlvD/Edd family. Homodimer. The cofactor is [2Fe-2S] cluster. Mg(2+) is required as a cofactor.

The enzyme catalyses (2R)-2,3-dihydroxy-3-methylbutanoate = 3-methyl-2-oxobutanoate + H2O. The catalysed reaction is (2R,3R)-2,3-dihydroxy-3-methylpentanoate = (S)-3-methyl-2-oxopentanoate + H2O. It functions in the pathway amino-acid biosynthesis; L-isoleucine biosynthesis; L-isoleucine from 2-oxobutanoate: step 3/4. It participates in amino-acid biosynthesis; L-valine biosynthesis; L-valine from pyruvate: step 3/4. Functions in the biosynthesis of branched-chain amino acids. Catalyzes the dehydration of (2R,3R)-2,3-dihydroxy-3-methylpentanoate (2,3-dihydroxy-3-methylvalerate) into 2-oxo-3-methylpentanoate (2-oxo-3-methylvalerate) and of (2R)-2,3-dihydroxy-3-methylbutanoate (2,3-dihydroxyisovalerate) into 2-oxo-3-methylbutanoate (2-oxoisovalerate), the penultimate precursor to L-isoleucine and L-valine, respectively. This is Dihydroxy-acid dehydratase from Acinetobacter baumannii (strain ACICU).